The sequence spans 747 residues: Polyribonucleotide nucleotidyltransferase (747 aa).

The Mg(2+) site is built by aspartate 493 and aspartate 499. Residues 560–619 (PRIITLQINPEKIGALIGPGGKTVRGITEATGAQIDIEEDGRVYISTPDAAAAQQAVAMV) enclose the KH domain. Positions 629–698 (GDIFLGKVVR…GTGKVSLSRR (70 aa)) constitute an S1 motif domain. Residues 705 to 747 (TAEDRRAAGAGRGLRDGGGRSGGSDRGGDRGPRGDDRQRPRRR) are disordered. Basic and acidic residues-rich tracts occupy residues 706–722 (AEDR…RDGG) and 730–747 (RGGD…PRRR).

It belongs to the polyribonucleotide nucleotidyltransferase family. Mg(2+) is required as a cofactor.

It localises to the cytoplasm. It carries out the reaction RNA(n+1) + phosphate = RNA(n) + a ribonucleoside 5'-diphosphate. Involved in mRNA degradation. Catalyzes the phosphorolysis of single-stranded polyribonucleotides processively in the 3'- to 5'-direction. This is Polyribonucleotide nucleotidyltransferase from Roseiflexus sp. (strain RS-1).